The primary structure comprises 296 residues: Ribonuclease HIII (296 aa).

Residues 80-296 (LALIGSDEVG…NTKKAYQRLK (217 aa)) form the RNase H type-2 domain. 3 residues coordinate a divalent metal cation: aspartate 86, glutamate 87, and aspartate 191.

Belongs to the RNase HII family. RnhC subfamily. Mn(2+) serves as cofactor. The cofactor is Mg(2+).

It is found in the cytoplasm. The catalysed reaction is Endonucleolytic cleavage to 5'-phosphomonoester.. Endonuclease that specifically degrades the RNA of RNA-DNA hybrids. The sequence is that of Ribonuclease HIII from Streptococcus thermophilus (strain ATCC BAA-491 / LMD-9).